The primary structure comprises 148 residues: Aspartate 1-decarboxylase (148 aa).

The Schiff-base intermediate with substrate; via pyruvic acid role is filled by S25. S25 bears the Pyruvic acid (Ser) mark. Position 57 (T57) interacts with substrate. The Proton donor role is filled by Y58. Substrate is bound at residue 73 to 75 (GAA).

This sequence belongs to the PanD family. As to quaternary structure, heterooctamer of four alpha and four beta subunits. It depends on pyruvate as a cofactor. Post-translationally, is synthesized initially as an inactive proenzyme, which is activated by self-cleavage at a specific serine bond to produce a beta-subunit with a hydroxyl group at its C-terminus and an alpha-subunit with a pyruvoyl group at its N-terminus.

The protein localises to the cytoplasm. It catalyses the reaction L-aspartate + H(+) = beta-alanine + CO2. The protein operates within cofactor biosynthesis; (R)-pantothenate biosynthesis; beta-alanine from L-aspartate: step 1/1. Functionally, catalyzes the pyruvoyl-dependent decarboxylation of aspartate to produce beta-alanine. This Rhodococcus opacus (strain B4) protein is Aspartate 1-decarboxylase.